The primary structure comprises 233 residues: Nuclear speckle RNA-binding protein A (233 aa).

3 disordered regions span residues M1–T54, V68–V92, and F214–R233. The segment covering G71–N91 has biased composition (gly residues). Residues N136–K222 enclose the RRM domain.

In terms of tissue distribution, expressed in root meristems, lateral root primordia and root vascular tissues.

Its subcellular location is the nucleus speckle. Alternative splicing (AS) regulator that binds to specific mRNAs and modulates auxin effects on the transcriptome. Displaced from its targets upon binding to AS competitor long non-coding RNA (ASCO-RNA). The chain is Nuclear speckle RNA-binding protein A from Arabidopsis thaliana (Mouse-ear cress).